The primary structure comprises 178 residues: MSKHKGPTGAMVDPESLPYRPCVGLMVLNKAGLVWAGRRIVIPGDEMDGATQLWQMPQGGIDKGEDPAQAALRELYEETGMTSVSLLEEASDWINYDLPPHLVGLALKGKYRGQTQKWFAYRFEGDESEIAINPPPGGHTAEFDCWEWKPMADLPNLIVPFKRKVYEQVVATFRHLAA.

Residues 18-171 (PYRPCVGLMV…KRKVYEQVVA (154 aa)) form the Nudix hydrolase domain. A Nudix box motif is present at residues 59–80 (GGIDKGEDPAQAALRELYEETG).

This sequence belongs to the Nudix hydrolase family. RppH subfamily. Requires a divalent metal cation as cofactor.

Its function is as follows. Accelerates the degradation of transcripts by removing pyrophosphate from the 5'-end of triphosphorylated RNA, leading to a more labile monophosphorylated state that can stimulate subsequent ribonuclease cleavage. The chain is RNA pyrophosphohydrolase from Brucella canis (strain ATCC 23365 / NCTC 10854 / RM-666).